The sequence spans 182 residues: Large ribosomal subunit protein bL25 (182 aa).

It belongs to the bacterial ribosomal protein bL25 family. CTC subfamily. As to quaternary structure, part of the 50S ribosomal subunit; part of the 5S rRNA/L5/L18/L25 subcomplex. Contacts the 5S rRNA. Binds to the 5S rRNA independently of L5 and L18.

This is one of the proteins that binds to the 5S RNA in the ribosome where it forms part of the central protuberance. The protein is Large ribosomal subunit protein bL25 of Borreliella burgdorferi (strain ATCC 35210 / DSM 4680 / CIP 102532 / B31) (Borrelia burgdorferi).